We begin with the raw amino-acid sequence, 427 residues long: MSIFCLAAYFWLTMVGGVMADNPERYSANLSSHMEDFTPFPGTEINFLGTTHRPPNLALPSNGSMHGYCPQQTKITTAFKYINTVISCTIFIVGMVGNATLLRIIYQNKCMRNGPNALIASLALGDLIYVVIDLPINVFKLLAGRWPFDHNDFGVFLCKLFPFLQKSSVGITVLNLCALSVDRYRAVASWSRVQGIGIPLITAIEIVSIWILSFILAIPEAIGFVMVPFEYKGELHRTCMLNATSKFMEFYQDVKDWWLFGFYFCMPLVCTAIFYTLMTCEMLNRRNGSLRIALSEHLKQRREVAKTVFCLVVIFALCWFPLHLSRILKKTVYDEMDKNRCELLSFLLLMDYIGINLATMNSCINPIALYFVSKKFKNCFQSCLCCCCHQSKSLMTSVPMNGTSIQWKNQEQNNHNTERSSHKDSMN.

An N-terminal signal peptide occupies residues 1 to 20 (MSIFCLAAYFWLTMVGGVMA). Residues 21–80 (DNPERYSANLSSHMEDFTPFPGTEINFLGTTHRPPNLALPSNGSMHGYCPQQTKITTAFK) are Extracellular-facing. Residues Asn-29 and Asn-62 are each glycosylated (N-linked (GlcNAc...) asparagine). A helical transmembrane segment spans residues 81-102 (YINTVISCTIFIVGMVGNATLL). At 103-112 (RIIYQNKCMR) the chain is on the cytoplasmic side. A helical transmembrane segment spans residues 113 to 132 (NGPNALIASLALGDLIYVVI). The Extracellular segment spans residues 133–159 (DLPINVFKLLAGRWPFDHNDFGVFLCK). An intrachain disulfide couples Cys-158 to Cys-239. Residues 160–181 (LFPFLQKSSVGITVLNLCALSV) traverse the membrane as a helical segment. Residues 182 to 205 (DRYRAVASWSRVQGIGIPLITAIE) are Cytoplasmic-facing. A helical membrane pass occupies residues 206-229 (IVSIWILSFILAIPEAIGFVMVPF). Residues 230–256 (EYKGELHRTCMLNATSKFMEFYQDVKD) are Extracellular-facing. N-linked (GlcNAc...) asparagine glycosylation occurs at Asn-242. A helical transmembrane segment spans residues 257–278 (WWLFGFYFCMPLVCTAIFYTLM). Residues 279–306 (TCEMLNRRNGSLRIALSEHLKQRREVAK) are Cytoplasmic-facing. A helical transmembrane segment spans residues 307–328 (TVFCLVVIFALCWFPLHLSRIL). Topologically, residues 329-347 (KKTVYDEMDKNRCELLSFL) are extracellular. Residues 348-372 (LLMDYIGINLATMNSCINPIALYFV) form a helical membrane-spanning segment. The Cytoplasmic segment spans residues 373 to 427 (SKKFKNCFQSCLCCCCHQSKSLMTSVPMNGTSIQWKNQEQNNHNTERSSHKDSMN). The disordered stretch occupies residues 408–427 (KNQEQNNHNTERSSHKDSMN). The segment covering 416–427 (NTERSSHKDSMN) has biased composition (basic and acidic residues). Residue Ser-425 is modified to Phosphoserine.

It belongs to the G-protein coupled receptor 1 family. Endothelin receptor subfamily. EDNRA sub-subfamily. Interacts with HDAC7 and KAT5.

It localises to the cell membrane. Functionally, receptor for endothelin-1. Mediates its action by association with G proteins that activate a phosphatidylinositol-calcium second messenger system. The rank order of binding affinities for ET-A is: ET1 &gt; ET2 &gt;&gt; ET3. This chain is Endothelin-1 receptor, found in Mus musculus (Mouse).